The following is a 238-amino-acid chain: 5'-deoxynucleotidase YBR242W (238 aa).

The HD domain maps to 77 to 183; that stretch reads ISDHMYRLSI…VKDIDKYEML (107 aa). A divalent metal cation-binding residues include histidine 80, histidine 108, aspartate 109, glutamate 112, aspartate 117, isoleucine 118, and aspartate 178.

It belongs to the HDDC2 family. Homodimer. The cofactor is Mn(2+). It depends on Co(2+) as a cofactor. Mg(2+) is required as a cofactor.

It carries out the reaction a 2'-deoxyribonucleoside 5'-phosphate + H2O = a 2'-deoxyribonucleoside + phosphate. In terms of biological role, catalyzes the dephosphorylation of the nucleoside 5'-monophosphates deoxyadenosine monophosphate (dAMP), deoxycytidine monophosphate (dCMP), deoxyguanosine monophosphate (dGMP) and deoxythymidine monophosphate (dTMP). This chain is 5'-deoxynucleotidase YBR242W, found in Saccharomyces cerevisiae (strain ATCC 204508 / S288c) (Baker's yeast).